The primary structure comprises 370 residues: Anhydro-N-acetylmuramic acid kinase (370 aa).

13 to 20 provides a ligand contact to ATP; sequence GTSMDGID.

The protein belongs to the anhydro-N-acetylmuramic acid kinase family.

The enzyme catalyses 1,6-anhydro-N-acetyl-beta-muramate + ATP + H2O = N-acetyl-D-muramate 6-phosphate + ADP + H(+). It participates in amino-sugar metabolism; 1,6-anhydro-N-acetylmuramate degradation. It functions in the pathway cell wall biogenesis; peptidoglycan recycling. Functionally, catalyzes the specific phosphorylation of 1,6-anhydro-N-acetylmuramic acid (anhMurNAc) with the simultaneous cleavage of the 1,6-anhydro ring, generating MurNAc-6-P. Is required for the utilization of anhMurNAc either imported from the medium or derived from its own cell wall murein, and thus plays a role in cell wall recycling. The polypeptide is Anhydro-N-acetylmuramic acid kinase (Rhizobium etli (strain ATCC 51251 / DSM 11541 / JCM 21823 / NBRC 15573 / CFN 42)).